Reading from the N-terminus, the 221-residue chain is GTP cyclohydrolase III (221 aa).

Belongs to the archaeal-type GTP cyclohydrolase family.

The enzyme catalyses GTP + 3 H2O = 2-amino-5-formylamino-6-(5-phospho-D-ribosylamino)pyrimidin-4(3H)-one + 2 phosphate + 2 H(+). Its function is as follows. Catalyzes the formation of 2-amino-5-formylamino-6-ribofuranosylamino-4(3H)-pyrimidinone ribonucleotide monophosphate and inorganic phosphate from GTP. Also has an independent pyrophosphate phosphohydrolase activity. The protein is GTP cyclohydrolase III of Pyrobaculum neutrophilum (strain DSM 2338 / JCM 9278 / NBRC 100436 / V24Sta) (Thermoproteus neutrophilus).